Reading from the N-terminus, the 154-residue chain is Ribonuclease H (154 aa).

An RNase H type-1 domain is found at 1 to 142; that stretch reads MQKQIEIFTD…CDELAKKGAE (142 aa). Mg(2+)-binding residues include Asp-10, Glu-48, Asp-70, and Asp-134.

This sequence belongs to the RNase H family. As to quaternary structure, monomer. Mg(2+) is required as a cofactor.

The protein localises to the cytoplasm. The enzyme catalyses Endonucleolytic cleavage to 5'-phosphomonoester.. Functionally, endonuclease that specifically degrades the RNA of RNA-DNA hybrids. This Haemophilus influenzae (strain 86-028NP) protein is Ribonuclease H.